The following is a 647-amino-acid chain: Sialidase (647 aa).

An N-terminal signal peptide occupies residues 1–37; it reads MTANPYLRRLPRRRAVSFLLAPALAAATVAGASPAQA. Arg68 is a substrate binding site. Asp92 (proton acceptor) is an active-site residue. 3 BNR repeats span residues 102-113, 175-186, and 239-250; these read RRSTDGGRTWGE, ATSTDGGLTWSH, and VYSDDHGRTWRA. Glu260 serves as the catalytic Nucleophile. Arg276 is a binding site for substrate. BNR repeat units lie at residues 287–298 and 348–359; these read AVSTDGGHSYGP and RMSCDDGQTWPV. Tyr370 (nucleophile) is an active-site residue. Residues 496–646 form the F5/8 type C domain; it reads TFTVTVGLLD…AVAELEVEGQ (151 aa).

It belongs to the glycosyl hydrolase 33 family.

Its subcellular location is the secreted. It catalyses the reaction Hydrolysis of alpha-(2-&gt;3)-, alpha-(2-&gt;6)-, alpha-(2-&gt;8)- glycosidic linkages of terminal sialic acid residues in oligosaccharides, glycoproteins, glycolipids, colominic acid and synthetic substrates.. Its function is as follows. To release sialic acids for use as carbon and energy sources for this non-pathogenic bacterium while in pathogenic microorganisms, sialidases have been suggested to be pathogenic factors. In Micromonospora viridifaciens, this protein is Sialidase (nedA).